The chain runs to 63 residues: Large ribosomal subunit protein bL28 (63 aa).

The protein belongs to the bacterial ribosomal protein bL28 family.

In Symbiobacterium thermophilum (strain DSM 24528 / JCM 14929 / IAM 14863 / T), this protein is Large ribosomal subunit protein bL28.